The following is a 373-amino-acid chain: 3 beta-hydroxysteroid dehydrogenase/Delta 5--&gt;4-isomerase (373 aa).

Tyr-155 functions as the Proton acceptor in the catalytic mechanism. Lys-159 serves as a coordination point for NAD(+). Residues 288–308 (ISLQYWLAFLLEIVSFLLSPI) traverse the membrane as a helical segment.

Belongs to the 3-beta-HSD family.

It is found in the endoplasmic reticulum membrane. Its subcellular location is the mitochondrion membrane. The enzyme catalyses a 3beta-hydroxy-Delta(5)-steroid + NAD(+) = a 3-oxo-Delta(5)-steroid + NADH + H(+). It catalyses the reaction a 3-oxo-Delta(5)-steroid = a 3-oxo-Delta(4)-steroid. It participates in lipid metabolism; steroid biosynthesis. Functionally, 3-beta-HSD is a bifunctional enzyme, that catalyzes the oxidative conversion of Delta(5)-ene-3-beta-hydroxy steroid, and the oxidative conversion of ketosteroids. The 3-beta-HSD enzymatic system plays a crucial role in the biosynthesis of all classes of hormonal steroids. The sequence is that of 3 beta-hydroxysteroid dehydrogenase/Delta 5--&gt;4-isomerase (HSD3B) from Bos taurus (Bovine).